The chain runs to 142 residues: Large ribosomal subunit protein uL13 (142 aa).

Belongs to the universal ribosomal protein uL13 family. In terms of assembly, part of the 50S ribosomal subunit.

In terms of biological role, this protein is one of the early assembly proteins of the 50S ribosomal subunit, although it is not seen to bind rRNA by itself. It is important during the early stages of 50S assembly. The protein is Large ribosomal subunit protein uL13 of Stenotrophomonas maltophilia (strain R551-3).